A 626-amino-acid polypeptide reads, in one-letter code: Ankyrin repeat domain-containing protein 13B (626 aa).

Methionine 1 carries the N-acetylmethionine modification. 2 ANK repeats span residues 47 to 76 (RGRTPLHLATTLGHLECARVLLAHGADVGR) and 80 to 109 (SGWTVLQEAVSTRDLELVQLVLRYRDYQRV). The disordered stretch occupies residues 442–474 (PVPSVRGSPSSETPSPGSDSSSVSSSSSTTSCR). Low complexity predominate over residues 449–472 (SPSSETPSPGSDSSSVSSSSSTTS). One can recognise a UIM 1 domain in the interval 503-522 (DDDDLLQFAIQQSLLEAGSE). Disordered stretches follow at residues 534-590 (NSKP…DEQL) and 595-614 (ELSAQEQEERRRRARQEEEE). Over residues 554 to 573 (PPTPQRQPAPPASVPSPRPS) the composition is skewed to pro residues. 2 consecutive UIM domains span residues 585-604 (SYDEQLRLAMELSAQEQEER) and 610-626 (QEEEELERILRLSLTEQ).

Interacts with EGFR (ubiquitinated); the interaction is direct and may regulate EGFR internalization.

Its subcellular location is the cell membrane. The protein localises to the late endosome. It localises to the early endosome. Its function is as follows. Ubiquitin-binding protein that specifically recognizes and binds 'Lys-63'-linked ubiquitin. Does not bind 'Lys-48'-linked ubiquitin. Positively regulates the internalization of ligand-activated EGFR by binding to the Ub moiety of ubiquitinated EGFR at the cell membrane. This chain is Ankyrin repeat domain-containing protein 13B (ANKRD13B), found in Homo sapiens (Human).